The primary structure comprises 203 residues: LexA repressor (203 aa).

Residues 28–47 (IREIGDEFGITAKGAYDHLK) constitute a DNA-binding region (H-T-H motif). Residues serine 127 and lysine 164 each act as for autocatalytic cleavage activity in the active site.

The protein belongs to the peptidase S24 family. Homodimer.

The enzyme catalyses Hydrolysis of Ala-|-Gly bond in repressor LexA.. Its function is as follows. Represses a number of genes involved in the response to DNA damage (SOS response), including recA and lexA. In the presence of single-stranded DNA, RecA interacts with LexA causing an autocatalytic cleavage which disrupts the DNA-binding part of LexA, leading to derepression of the SOS regulon and eventually DNA repair. The sequence is that of LexA repressor from Leptospira interrogans serogroup Icterohaemorrhagiae serovar copenhageni (strain Fiocruz L1-130).